The chain runs to 732 residues: Zinc-exporting P-type ATPase (732 aa).

An HMA domain is found at 29 to 96 (GRMRVRADWV…AIGGAKHVAA (68 aa)). The next 6 membrane-spanning stretches (helical) occupy residues 105 to 123 (HSTEIRNTDVLRMVIGGAA), 146 to 164 (MVATGVTIFTGYPFLRGAL), 172 to 186 (AGTDALVSAATIASL), 195 to 209 (LTVLWLLNIGEYLQD), 342 to 366 (VGENFSRRFVPTSFIVSAITLLVTG), and 372 to 390 (MTMLLIACPCAVGLSTPTA). The active-site 4-aspartylphosphate intermediate is the aspartate 423. Positions 423, 425, and 625 each coordinate Mg(2+). Transmembrane regions (helical) follow at residues 676 to 695 (AVDVIRQNYGMSIAVNAAGL) and 705 to 724 (PVLAAILHNASSVAVVANSS).

This sequence belongs to the cation transport ATPase (P-type) (TC 3.A.3) family. Type IB subfamily.

It localises to the cell membrane. The enzyme catalyses Zn(2+)(in) + ATP + H2O = Zn(2+)(out) + ADP + phosphate + H(+). Its function is as follows. Zn(2+) efflux transporter which is involved in detoxification of zinc during infection. The polypeptide is Zinc-exporting P-type ATPase (Mycobacterium marinum (strain ATCC BAA-535 / M)).